The following is a 646-amino-acid chain: Acetyl-coenzyme A synthetase (646 aa).

Residues 190-193 (RAGN) and Thr309 contribute to the CoA site. Residues 385 to 387 (GEP), 409 to 414 (DTWWQT), Asp498, and Arg513 contribute to the ATP site. Ser521 is a CoA binding site. Arg524 provides a ligand contact to ATP. 3 residues coordinate Mg(2+): Val535, His537, and Val540. Residue Arg582 coordinates CoA. The residue at position 607 (Lys607) is an N6-acetyllysine.

Belongs to the ATP-dependent AMP-binding enzyme family. Requires Mg(2+) as cofactor. In terms of processing, acetylated. Deacetylation by the SIR2-homolog deacetylase activates the enzyme.

It catalyses the reaction acetate + ATP + CoA = acetyl-CoA + AMP + diphosphate. In terms of biological role, catalyzes the conversion of acetate into acetyl-CoA (AcCoA), an essential intermediate at the junction of anabolic and catabolic pathways. AcsA undergoes a two-step reaction. In the first half reaction, AcsA combines acetate with ATP to form acetyl-adenylate (AcAMP) intermediate. In the second half reaction, it can then transfer the acetyl group from AcAMP to the sulfhydryl group of CoA, forming the product AcCoA. The chain is Acetyl-coenzyme A synthetase from Pseudoalteromonas translucida (strain TAC 125).